Reading from the N-terminus, the 688-residue chain is Translation initiation factor IF-2 (688 aa).

Basic and acidic residues predominate over residues 50-62 (LLSGKEKSEKTKE). The segment at 50 to 95 (LLSGKEKSEKTKEEDDEIETTAKNPIKESINNKKSNKRDDKKEKVN) is disordered. The span at 72-82 (KNPIKESINNK) shows a compositional bias: low complexity. Residues 86–95 (KRDDKKEKVN) are compositionally biased toward basic and acidic residues. Positions 187–354 (KRSPIITVMG…MILLSSEILE (168 aa)) constitute a tr-type G domain. The G1 stretch occupies residues 196-203 (GHVDHGKT). A GTP-binding site is contributed by 196–203 (GHVDHGKT). The segment at 221 to 225 (GITQH) is G2. The interval 242–245 (DTPG) is G3. GTP-binding positions include 242–246 (DTPGH) and 296–299 (NKID). Residues 296-299 (NKID) are G4. The segment at 332–334 (SAH) is G5.

The protein belongs to the TRAFAC class translation factor GTPase superfamily. Classic translation factor GTPase family. IF-2 subfamily.

It is found in the cytoplasm. Its function is as follows. One of the essential components for the initiation of protein synthesis. Protects formylmethionyl-tRNA from spontaneous hydrolysis and promotes its binding to the 30S ribosomal subunits. Also involved in the hydrolysis of GTP during the formation of the 70S ribosomal complex. The polypeptide is Translation initiation factor IF-2 (Clostridium botulinum (strain 657 / Type Ba4)).